We begin with the raw amino-acid sequence, 177 residues long: Thymidine kinase (177 aa).

Gly11 to Ser18 serves as a coordination point for ATP. Residue Glu83 is the Proton acceptor of the active site. Phe113 serves as a coordination point for substrate. Zn(2+) is bound by residues Cys138 and Cys141. Ile157–Gly161 serves as a coordination point for substrate. Positions 170 and 173 each coordinate Zn(2+).

It belongs to the thymidine kinase family. Homotetramer. Two molecules of substrate bind to each enzyme tetramer.

It catalyses the reaction thymidine + ATP = dTMP + ADP + H(+). Its function is as follows. Phosphorylates thymidine and thymidine analogs, such as azidothymidine (AZT). Part of the salvage pathway for pyrimidine deoxyribonucleotide synthesis. This chain is Thymidine kinase (OPG101), found in Variola virus.